The following is a 292-amino-acid chain: Phosphatidylserine decarboxylase proenzyme (292 aa).

Catalysis depends on charge relay system; for autoendoproteolytic cleavage activity residues D92, H149, and S255. The active-site Schiff-base intermediate with substrate; via pyruvic acid; for decarboxylase activity is S255. Position 255 is a pyruvic acid (Ser); by autocatalysis (S255).

Belongs to the phosphatidylserine decarboxylase family. PSD-B subfamily. Prokaryotic type I sub-subfamily. In terms of assembly, heterodimer of a large membrane-associated beta subunit and a small pyruvoyl-containing alpha subunit. Pyruvate serves as cofactor. Is synthesized initially as an inactive proenzyme. Formation of the active enzyme involves a self-maturation process in which the active site pyruvoyl group is generated from an internal serine residue via an autocatalytic post-translational modification. Two non-identical subunits are generated from the proenzyme in this reaction, and the pyruvate is formed at the N-terminus of the alpha chain, which is derived from the carboxyl end of the proenzyme. The autoendoproteolytic cleavage occurs by a canonical serine protease mechanism, in which the side chain hydroxyl group of the serine supplies its oxygen atom to form the C-terminus of the beta chain, while the remainder of the serine residue undergoes an oxidative deamination to produce ammonia and the pyruvoyl prosthetic group on the alpha chain. During this reaction, the Ser that is part of the protease active site of the proenzyme becomes the pyruvoyl prosthetic group, which constitutes an essential element of the active site of the mature decarboxylase.

The protein resides in the cell membrane. It catalyses the reaction a 1,2-diacyl-sn-glycero-3-phospho-L-serine + H(+) = a 1,2-diacyl-sn-glycero-3-phosphoethanolamine + CO2. It participates in phospholipid metabolism; phosphatidylethanolamine biosynthesis; phosphatidylethanolamine from CDP-diacylglycerol: step 2/2. Functionally, catalyzes the formation of phosphatidylethanolamine (PtdEtn) from phosphatidylserine (PtdSer). This chain is Phosphatidylserine decarboxylase proenzyme, found in Idiomarina loihiensis (strain ATCC BAA-735 / DSM 15497 / L2-TR).